The chain runs to 86 residues: Large ribosomal subunit protein bL31B (86 aa).

Belongs to the bacterial ribosomal protein bL31 family. Type B subfamily. Part of the 50S ribosomal subunit.

This chain is Large ribosomal subunit protein bL31B, found in Chloroherpeton thalassium (strain ATCC 35110 / GB-78).